A 731-amino-acid polypeptide reads, in one-letter code: Polyadenylate-binding protein, cytoplasmic and nuclear (731 aa).

Polar residues predominate over residues 1–10; the sequence is MSADVSTTPA. The disordered stretch occupies residues 1 to 51; sequence MSADVSTTPAAENVNGAAEASPAPAAAAPSATTPEVTAVENSTPAPAANQP. Residues 17–39 are compositionally biased toward low complexity; sequence AAEASPAPAAAAPSATTPEVTAV. RRM domains are found at residues 54–132, 142–219, 235–312, and 338–472; these read ASLY…WSQR, GNVF…HHIS, TNVY…RAQK, and VNLY…LAQR. 2 disordered regions span residues 369–429 and 603–665; these read VMRD…SDKK and GGRG…NAQT. Residues 616-627 are compositionally biased toward gly residues; sequence GMRGGPGYGQGR. A compositionally biased stretch (low complexity) spans 645–656; sequence QNAAAPAGPQEG. The PABC domain occupies 658 to 731; the sequence is AGGVNAQTLG…MRPLAFTMST (74 aa).

Belongs to the polyadenylate-binding protein type-1 family.

The protein resides in the cytoplasm. It localises to the nucleus. Binds the poly(A) tail of mRNA. Appears to be an important mediator of the multiple roles of the poly(A) tail in mRNA biogenesis, stability and translation. In the nucleus, involved in both mRNA cleavage and polyadenylation. Is also required for efficient mRNA export to the cytoplasm. Acts in concert with a poly(A)-specific nuclease (PAN) to affect poly(A) tail shortening, which may occur concomitantly with either nucleocytoplasmic mRNA transport or translational initiation. In the cytoplasm, stimulates translation initiation and regulates mRNA decay through translation termination-coupled poly(A) shortening, probably mediated by PAN. This chain is Polyadenylate-binding protein, cytoplasmic and nuclear (pab1), found in Aspergillus niger (strain ATCC MYA-4892 / CBS 513.88 / FGSC A1513).